The primary structure comprises 1905 residues: MRRWWGALLLGALLCAHGTASNLECACGRSHFTCAVSALGECTCIPAQWQCDGDNDCGDHSDEDGCTLPTCSPLDFHCDNGKCIRRSWVCDGDNDCEDDSDEQDCPPRECEEDEFPCQNGYCIRSLWHCDGDNDCGDNSDEQCDMRKCSDKEFRCSDGSCIAEHWYCDGDTDCKDGSDEESCPSAVPSPPCNLEEFQCAYGRCILDIYHCDGDDDCGDWSDESDCSSHQPCRSGEFMCDSGLCVNAGWRCDGDADCDDQSDERNCTTSMCTAEQFRCRSGRCVRLSWRCDGEDDCADNSDEENCENTGSPQCASDQFLCWNGRCIGQRKLCNGVNDCGDNSDESPQQNCRPRTGEENCNVNNGGCAQKCQMIRGAVQCTCHTGYRLTEDGRTCQDVNECAEEGYCSQGCTNSEGAFQCWCEAGYELRPDRRSCKALGPEPVLLFANRIDIRQVLPHRSEYTLLLNNLENAIALDFHHRRELVFWSDVTLDRILRANLNGSNVEEVVSTGLESPGGLAVDWVHDKLYWTDSGTSRIEVANLDGAHRKVLLWQSLEKPRAIALHPMEGTIYWTDWGNTPRIEASSMDGSGRRIIADTHLFWPNGLTIDYAGRRMYWVDAKHHVIERANLDGSHRKAVISQGLPHPFAITVFEDSLYWTDWHTKSINSANKFTGKNQEIIRNKLHFPMDIHTLHPQRQPAGKNRCGDNNGGCTHLCLPSGQNYTCACPTGFRKINSHACAQSLDKFLLFARRMDIRRISFDTEDLSDDVIPLADVRSAVALDWDSRDDHVYWTDVSTDTISRAKWDGTGQKVVVDTSLESPAGLAIDWVTNKLYWTDAGTDRIEVANTDGSMRTVLIWENLDRPRDIVVEPMGGYMYWTDWGASPKIERAGMDASNRQVIISSNLTWPNGLAIDYGSQRLYWADAGMKTIEFAGLDGSKRKVLIGSQLPHPFGLTLYGQRIYWTDWQTKSIQSADRLTGLDRETLQENLENLMDIHVFHRQRPPVTTPCAVENGGCSHLCLRSPSPSGFSCTCPTGINLLLDGKTCSPGMNSFLIFARRIDVRMVSLDIPYFADVVVPINMTMKNTIAIGVDPLEGKVYWSDSTLHRISRASLDGSQHEDIITTGLQTTDGLAVDAIGRKVYWTDTGTNRIEVGNLDGSMRKVLVWQNLDSPRAIVLYHEMGFMYWTDWGENAKLERSGMDGSDRTVLINNNLGWPNGLTVDKTSSQLLWADAHTERIEVADLNGANRHTLVSPVQHPYGLTLLDSYIYWTDWQTRSIHRADKSTGSNVILVRSNLPGLMDIQAVDRAQPLGFNKCGSRNGGCSHLCLPRPSGFSCACPTGIQLKGDGKTCDPSPETYLLFSSRGSIRRISLDTDDHTDVHVPVPGLNNVISLDYDSVDGKVYYTDVFLDVIRRADLNGSNMETVIGHGLKTTDGLAVDWVARNLYWTDTGRNTIEASRLDGSCRKVLINNSLDEPRAIAVFPRKGYLFWTDWGHIAKIERANLDGSERKVLINADLGWPNGLTLDYDTRRIYWVDAHLDRIESADLNGKLRQVLVSHVSHPFALTQQDRWIYWTDWQTKSIQRVDKYSGRNKETVLANVEGLMDIIVVSPQRQTGTNACGVNNGGCSHLCFARASDFVCACPDEPDSHPCSLVPGLMPPAPRATSLNEKSPVLPNTLPTTLHSSTTRTRTSPEGAEGRCSERDAQLGLCAHSNEAVPAAPGEGLHVSYAVGGLLSVLLILLVTAALMLYRHRKSKFTDPGMGNLTYSNPSYRTSTQEVKIEAAPKPAMYNQLCYKKEGGPDHSYTKEKIKIVEGIHLLAGHDAEWGDLKQLRSSRGGLLRDHVCMKTDTVSIQASSGSLDDTETEQLLQEEQSECSSVHTATTPERRGSLPDTGWKHERKLSSESQV.

A signal peptide spans 1-20; that stretch reads MRRWWGALLLGALLCAHGTA. At 21 to 1723 the chain is on the extracellular side; that stretch reads SNLECACGRS…VPAAPGEGLH (1703 aa). 8 consecutive LDL-receptor class A domains span residues 26-67, 70-106, 109-144, 147-183, 190-226, 230-266, 269-305, and 311-350; these read ACGR…DGCT, TCSP…QDCP, ECEE…EQCD, KCSD…ESCP, PCNL…SDCS, PCRS…RNCT, MCTA…ENCE, and QCAS…QNCR. Intrachain disulfides connect Cys-27–Cys-44, Cys-34–Cys-57, Cys-51–Cys-66, Cys-71–Cys-83, Cys-78–Cys-96, Cys-90–Cys-105, Cys-110–Cys-122, Cys-117–Cys-135, Cys-129–Cys-143, Cys-148–Cys-160, Cys-155–Cys-173, Cys-167–Cys-182, Cys-191–Cys-203, Cys-198–Cys-216, Cys-210–Cys-225, Cys-231–Cys-243, Cys-238–Cys-256, Cys-250–Cys-265, Cys-270–Cys-282, Cys-277–Cys-295, Cys-289–Cys-304, Cys-312–Cys-324, Cys-319–Cys-337, Cys-331–Cys-349, Cys-358–Cys-369, Cys-365–Cys-378, Cys-380–Cys-393, Cys-399–Cys-409, Cys-405–Cys-418, and Cys-420–Cys-433. Asn-264 carries an N-linked (GlcNAc...) asparagine glycan. Residues 354 to 394 form the EGF-like 1; atypical domain; sequence GEENCNVNNGGCAQKCQMIRGAVQCTCHTGYRLTEDGRTCQ. The 40-residue stretch at 395 to 434 folds into the EGF-like 2; calcium-binding domain; the sequence is DVNECAEEGYCSQGCTNSEGAFQCWCEAGYELRPDRRSCK. 5 LDL-receptor class B repeats span residues 480–522, 523–565, 566–609, 610–652, and 653–693; these read ELVF…DWVH, DKLY…HPME, GTIY…DYAG, RRMY…FEDS, and LYWT…LHPQ. An N-linked (GlcNAc...) asparagine glycan is attached at Asn-498. An EGF-like 3 domain is found at 698 to 737; it reads GKNRCGDNNGGCTHLCLPSGQNYTCACPTGFRKINSHACA. Intrachain disulfides connect Cys-702-Cys-713, Cys-709-Cys-722, and Cys-724-Cys-736. The N-linked (GlcNAc...) asparagine glycan is linked to Asn-719. LDL-receptor class B repeat units follow at residues 785–827, 828–870, 871–914, 915–956, and 957–998; these read DHVY…DWVT, NKLY…EPMG, GYMY…DYGS, QRLY…LYGQ, and RIYW…FHRQ. Asn-901 is a glycosylation site (N-linked (GlcNAc...) asparagine). The N-linked (GlcNAc...) asparagine glycan is linked to Asn-1077. LDL-receptor class B repeat units follow at residues 1093 to 1135, 1136 to 1178, 1179 to 1222, 1223 to 1263, 1264 to 1306, 1397 to 1439, 1440 to 1482, 1483 to 1526, 1527 to 1568, and 1569 to 1610; these read GKVY…DAIG, RKVY…YHEM, GFMY…DKTS, SQLL…LLDS, YIYW…DRAQ, GKVY…DWVA, RNLY…FPRK, GYLF…DYDT, RRIY…QDRW, and IYWT…SPQR. Asn-1415 and Asn-1467 each carry an N-linked (GlcNAc...) asparagine glycan. The interval 1659 to 1696 is disordered; the sequence is PRATSLNEKSPVLPNTLPTTLHSSTTRTRTSPEGAEGR. A compositionally biased stretch (low complexity) spans 1671-1690; it reads LPNTLPTTLHSSTTRTRTSP. A helical transmembrane segment spans residues 1724–1746; that stretch reads VSYAVGGLLSVLLILLVTAALML. The Cytoplasmic segment spans residues 1747–1905; sequence YRHRKSKFTD…ERKLSSESQV (159 aa). The interval 1853–1905 is disordered; sequence SSGSLDDTETEQLLQEEQSECSSVHTATTPERRGSLPDTGWKHERKLSSESQV. Positions 1872 to 1881 are enriched in polar residues; the sequence is ECSSVHTATT. Residues 1882-1905 are compositionally biased toward basic and acidic residues; the sequence is PERRGSLPDTGWKHERKLSSESQV.

Belongs to the LDLR family. Homooligomer. Interacts with MUSK; the heterodimer forms an AGRIN receptor complex that binds AGRIN resulting in activation of MUSK. Interacts (via the extracellular domain) with SOST; the interaction facilitates the inhibition of Wnt signaling. Interacts with MESD; the interaction promotes glycosylation of LRP4 and its cell-surface expression. In terms of processing, N-glycosylation is required for cell surface location. As to expression, expressed in different regions of the brain, mainly in the olfactory bulb, at lower level in the cerebral cortex and hippocampus.

It is found in the cell membrane. Its function is as follows. Mediates SOST-dependent inhibition of bone formation. Functions as a specific facilitator of SOST-mediated inhibition of Wnt signaling. Plays a key role in the formation and the maintenance of the neuromuscular junction (NMJ), the synapse between motor neuron and skeletal muscle. Directly binds AGRIN and recruits it to the MUSK signaling complex. Mediates the AGRIN-induced phosphorylation of MUSK, the kinase of the complex. The activation of MUSK in myotubes induces the formation of NMJ by regulating different processes including the transcription of specific genes and the clustering of AChR in the postsynaptic membrane. Alternatively, may be involved in the negative regulation of the canonical Wnt signaling pathway, being able to antagonize the LRP6-mediated activation of this pathway. More generally, has been proposed to function as a cell surface endocytic receptor binding and internalizing extracellular ligands for degradation by lysosomes. Plays an essential role in the process of digit differentiation. This chain is Low-density lipoprotein receptor-related protein 4 (Lrp4), found in Rattus norvegicus (Rat).